Consider the following 401-residue polypeptide: Probable tRNA sulfurtransferase (401 aa).

The 106-residue stretch at 63-168 (TTAEQALSYL…EREAFLYGAR (106 aa)) folds into the THUMP domain. ATP is bound by residues 186-187 (LL), 211-212 (YF), arginine 268, glycine 290, and glutamine 299.

It belongs to the ThiI family.

The protein localises to the cytoplasm. The enzyme catalyses [ThiI sulfur-carrier protein]-S-sulfanyl-L-cysteine + a uridine in tRNA + 2 reduced [2Fe-2S]-[ferredoxin] + ATP + H(+) = [ThiI sulfur-carrier protein]-L-cysteine + a 4-thiouridine in tRNA + 2 oxidized [2Fe-2S]-[ferredoxin] + AMP + diphosphate. It carries out the reaction [ThiS sulfur-carrier protein]-C-terminal Gly-Gly-AMP + S-sulfanyl-L-cysteinyl-[cysteine desulfurase] + AH2 = [ThiS sulfur-carrier protein]-C-terminal-Gly-aminoethanethioate + L-cysteinyl-[cysteine desulfurase] + A + AMP + 2 H(+). It participates in cofactor biosynthesis; thiamine diphosphate biosynthesis. In terms of biological role, catalyzes the ATP-dependent transfer of a sulfur to tRNA to produce 4-thiouridine in position 8 of tRNAs, which functions as a near-UV photosensor. Also catalyzes the transfer of sulfur to the sulfur carrier protein ThiS, forming ThiS-thiocarboxylate. This is a step in the synthesis of thiazole, in the thiamine biosynthesis pathway. The sulfur is donated as persulfide by IscS. The chain is Probable tRNA sulfurtransferase from Treponema pallidum (strain Nichols).